A 146-amino-acid chain; its full sequence is Hemoglobin cathodic subunit beta (146 aa).

The Globin domain occupies 2–146; sequence HFSDAERDAI…VAAALSSRYF (145 aa). Heme b is bound by residues His63 and His92.

The protein belongs to the globin family. Heterotetramer of two alpha chains and two beta chains. Red blood cells.

In terms of biological role, involved in oxygen transport from gills to the various peripheral tissues. The polypeptide is Hemoglobin cathodic subunit beta (hbb) (Hoplosternum littorale (Hassar)).